A 563-amino-acid polypeptide reads, in one-letter code: Ras and Rab interactor-like protein (563 aa).

The tract at residues 181–208 is disordered; it reads GWGTETPQQTEPETGQKYSLAPRKPTPH. A compositionally biased stretch (low complexity) spans 184–196; sequence TETPQQTEPETGQ. Residues 381–518 form the VPS9 domain; the sequence is AQELRRLRRR…IAHYQPDTGR (138 aa). A disordered region spans residues 539-563; that stretch reads TLHQQAQPTAQANQPFEEPWAIGDP. Residues 542-553 show a composition bias toward low complexity; it reads QQAQPTAQANQP.

In terms of assembly, interacts with RAB5A, RAB22A and MUSK. Detected in thymus and spleen (at protein level). Detected in lung, liver, kidney, spleen, thymus and skeletal muscle.

It is found in the cell projection. It localises to the ruffle. Its subcellular location is the cytoplasmic vesicle. Guanine nucleotide exchange factor (GEF) for RAB5A and RAB22A that activates RAB5A and RAB22A by exchanging bound GDP for free GTP. Plays a role in endocytosis via its role in activating Rab family members. The protein is Ras and Rab interactor-like protein (Rinl) of Mus musculus (Mouse).